A 363-amino-acid polypeptide reads, in one-letter code: uncharacterized protein (363 aa).

S-adenosyl-L-methionine-binding residues include glutamine 198, tyrosine 225, glutamate 246, and aspartate 291. Cysteine 318 acts as the Nucleophile in catalysis.

The protein belongs to the class I-like SAM-binding methyltransferase superfamily. RNA M5U methyltransferase family.

This is an uncharacterized protein from Mycoplasma mobile (strain ATCC 43663 / 163K / NCTC 11711) (Mesomycoplasma mobile).